Consider the following 194-residue polypeptide: ATP-dependent Clp protease proteolytic subunit (194 aa).

Catalysis depends on Ser-98, which acts as the Nucleophile. His-123 is an active-site residue.

This sequence belongs to the peptidase S14 family. In terms of assembly, component of the chloroplastic Clp protease core complex.

It is found in the plastid. It localises to the cyanelle. The catalysed reaction is Hydrolysis of proteins to small peptides in the presence of ATP and magnesium. alpha-casein is the usual test substrate. In the absence of ATP, only oligopeptides shorter than five residues are hydrolyzed (such as succinyl-Leu-Tyr-|-NHMec, and Leu-Tyr-Leu-|-Tyr-Trp, in which cleavage of the -Tyr-|-Leu- and -Tyr-|-Trp bonds also occurs).. Its function is as follows. Cleaves peptides in various proteins in a process that requires ATP hydrolysis. Has a chymotrypsin-like activity. Plays a major role in the degradation of misfolded proteins. The sequence is that of ATP-dependent Clp protease proteolytic subunit (clpP-A) from Cyanophora paradoxa.